The following is a 364-amino-acid chain: Histidinol-phosphate aminotransferase (364 aa).

The interval M1–P46 is disordered. Over residues G17–I33 the composition is skewed to basic and acidic residues. Residue K222 is modified to N6-(pyridoxal phosphate)lysine.

It belongs to the class-II pyridoxal-phosphate-dependent aminotransferase family. Histidinol-phosphate aminotransferase subfamily. Pyridoxal 5'-phosphate is required as a cofactor.

It catalyses the reaction L-histidinol phosphate + 2-oxoglutarate = 3-(imidazol-4-yl)-2-oxopropyl phosphate + L-glutamate. Its pathway is amino-acid biosynthesis; L-histidine biosynthesis; L-histidine from 5-phospho-alpha-D-ribose 1-diphosphate: step 7/9. The chain is Histidinol-phosphate aminotransferase from Halorubrum lacusprofundi (strain ATCC 49239 / DSM 5036 / JCM 8891 / ACAM 34).